The chain runs to 655 residues: Polycyclic ketone monooxygenase (655 aa).

FAD-binding residues include Gly-89, Asp-113, Ala-114, Thr-121, Trp-124, Cys-132, Asp-133, Tyr-139, and Val-183. NADPH contacts are provided by Thr-277, Thr-280, Thr-301, Lys-425, and Val-452. A disulfide bond links Cys-424 and Cys-596. The FAD site is built by Thr-492 and Asn-541. Tyr-600 serves as a coordination point for NADPH.

This sequence belongs to the FAD-binding monooxygenase family. The cofactor is FAD.

In terms of biological role, polycyclic ketone monooxygenase (PockeMO) that displays excellent enantioselectivity, acts on various ketones, and is particularly active on polycyclic molecules. Breaks C-C bonds through the insertion of a single oxygen atom adjacent to a carbonyl moiety, yielding esters or lactones from ketones. PockeMO is able to convert linear ketones (including cyclohexane and to a lesser extend 4-octanone), cyclic ketones (including cyclohexanone and cyclooctanone), bicyclic ketones and polycyclic ketones (steroids). Performs oxidation of the keto functionalities at both the A and D rings of steroids. Particularly, oxidizes the A ring of stanolone or pregnenolone. Selectively oxidizes the D ring of androstenedione or androstadienedione, steroids with keto groups in both the A and D rings, to yield the pharmaceutically relevant testo(lo)lactone. The sequence is that of Polycyclic ketone monooxygenase from Thermothelomyces thermophilus (strain ATCC 42464 / BCRC 31852 / DSM 1799) (Sporotrichum thermophile).